Consider the following 68-residue polypeptide: MMLYPSIDNLLLKIDSKYSLVTVAAKRARYMQLENDKGVLPSYQSDKFVGKALEEIHAGKLVLQNDDK.

Belongs to the RNA polymerase subunit omega family. In terms of assembly, the RNAP catalytic core consists of 2 alpha, 1 beta, 1 beta' and 1 omega subunit. When a sigma factor is associated with the core the holoenzyme is formed, which can initiate transcription.

The catalysed reaction is RNA(n) + a ribonucleoside 5'-triphosphate = RNA(n+1) + diphosphate. In terms of biological role, promotes RNA polymerase assembly. Latches the N- and C-terminal regions of the beta' subunit thereby facilitating its interaction with the beta and alpha subunits. The chain is DNA-directed RNA polymerase subunit omega from Listeria monocytogenes serotype 4b (strain CLIP80459).